The following is a 928-amino-acid chain: Protein NETWORKED 2B (928 aa).

In terms of domain architecture, NAB spans 10-90 (YSWWWASHIR…ERYDHLSTEL (81 aa)). Positions 108–144 (PLVDDDDDDDDDNPKKPPKHLHLIPSGTNIPQVPEVP) are disordered. Over residues 110–119 (VDDDDDDDDD) the composition is skewed to acidic residues. 2 coiled-coil regions span residues 207 to 309 (SYEQ…AKKA) and 360 to 445 (ALLK…VKMD). Disordered stretches follow at residues 447 to 472 (DVEG…SISN) and 489 to 529 (KQSR…EERR). Residues 457-468 (DIQEEDTVEDSD) show a composition bias toward acidic residues. Positions 489 to 506 (KQSRDQESMQEEKSETRD) are enriched in basic and acidic residues. The stretch at 547-574 (LLDEYSSVLRDYREVKRKLSEVEKKNRD) forms a coiled coil. The segment at 620 to 651 (AESVSISHSSNSSFSMPPLPQRGDLKRASEQE) is disordered. The segment covering 622-634 (SVSISHSSNSSFS) has biased composition (low complexity). Positions 642–651 (GDLKRASEQE) are enriched in basic and acidic residues.

Belongs to the NET family.

Plant-specific actin binding protein. May be part of a membrane-cytoskeletal adapter complex. The chain is Protein NETWORKED 2B from Arabidopsis thaliana (Mouse-ear cress).